Here is a 527-residue protein sequence, read N- to C-terminus: Protein TIC 56, chloroplastic (527 aa).

Residues 1–48 constitute a chloroplast transit peptide; sequence MSSMNFNPFQNWFEKPPNPVPSINFVSLADSFFPKSQSPNFASIGLPK. The disordered stretch occupies residues 43–67; the sequence is SIGLPKFSKKSPKPETAGTDEPGPY. Asparagine 350 is modified (deamidated asparagine). Residues 491–508 show a composition bias toward basic and acidic residues; it reads RREEELREEDLKHYSGRT. The interval 491–527 is disordered; sequence RREEELREEDLKHYSGRTDEDEEEEEEEDDDSNSKKD. Residues 509 to 521 are compositionally biased toward acidic residues; sequence DEDEEEEEEEDDD.

Part of the Tic complex. Component of the 1-MD complex, composed of TIC20-I, TIC214, TIC100 and TIC56. Interacts with the translocating preproteins. Hydrolysis of ATP is essential for the formation of this complex. The 1-MD complex interacts with TIC21.

The protein resides in the plastid. It localises to the chloroplast inner membrane. Its function is as follows. Involved in protein precursor import into chloroplasts. May be part of an intermediate translocation complex acting as a protein-conducting channel at the inner envelope. The chain is Protein TIC 56, chloroplastic from Arabidopsis thaliana (Mouse-ear cress).